The sequence spans 764 residues: Ergosteryl-beta-glucosidase (764 aa).

The active-site Nucleophile is the Glu-515. The disordered stretch occupies residues 588–629 (HDTRAKTPTPEPSPASTVASVSTSTSKSGSSQPPSFIKPDNH). Thr-594 is subject to Phosphothreonine. Residues 601 to 622 (PASTVASVSTSTSKSGSSQPPS) are compositionally biased toward low complexity.

The protein belongs to the glycosyl hydrolase 5 (cellulase A) family.

It is found in the cytoplasm. It localises to the cytosol. The protein resides in the vacuole membrane. The catalysed reaction is ergosteryl 3-beta-D-glucoside + H2O = ergosterol + D-glucose. Its function is as follows. Ergosteryl beta-glucosidase involved in the ergosteryl beta-glucoside (EG) catabolic pathway and vacuole formation via hydrolysis of EG to generate glucose. Is also able to hydrolyze cholesteryl beta-glucoside and sitosteryl beta-glucoside to generate glucose; and C6-7-nitro-2,1,3-benzoxadiazole (NBD)-GlcCer to generate C6-NBD-ceramide (Cer). This chain is Ergosteryl-beta-glucosidase, found in Saccharomyces cerevisiae (strain ATCC 204508 / S288c) (Baker's yeast).